A 528-amino-acid chain; its full sequence is Chaperonin GroEL, chloroplastic (528 aa).

Residues 29–32 (TLGP), 86–90 (DGTTT), Gly-415, 481–483 (NAA), and Asp-497 contribute to the ATP site.

This sequence belongs to the chaperonin (HSP60) family. As to quaternary structure, forms a cylinder of 14 subunits composed of two heptameric rings stacked back-to-back. Interacts with the co-chaperonin GroES.

It is found in the plastid. The protein localises to the chloroplast. The enzyme catalyses ATP + H2O + a folded polypeptide = ADP + phosphate + an unfolded polypeptide.. Functionally, together with its co-chaperonin GroES, plays an essential role in assisting protein folding. The GroEL-GroES system forms a nano-cage that allows encapsulation of the non-native substrate proteins and provides a physical environment optimized to promote and accelerate protein folding. This chain is Chaperonin GroEL, chloroplastic, found in Trieres chinensis (Marine centric diatom).